Here is a 340-residue protein sequence, read N- to C-terminus: Anthranilate phosphoribosyltransferase (340 aa).

5-phospho-alpha-D-ribose 1-diphosphate is bound by residues Gly82, 85–86 (GD), Thr90, 92–95 (NIST), 110–118 (KHGSRSVSS), and Ser122. Anthranilate is bound at residue Gly82. Position 94 (Ser94) interacts with Mg(2+). An anthranilate-binding site is contributed by Arg168. 2 residues coordinate Mg(2+): Asp227 and Glu228.

Belongs to the anthranilate phosphoribosyltransferase family. In terms of assembly, homodimer. Requires Mg(2+) as cofactor.

The enzyme catalyses N-(5-phospho-beta-D-ribosyl)anthranilate + diphosphate = 5-phospho-alpha-D-ribose 1-diphosphate + anthranilate. It functions in the pathway amino-acid biosynthesis; L-tryptophan biosynthesis; L-tryptophan from chorismate: step 2/5. In terms of biological role, catalyzes the transfer of the phosphoribosyl group of 5-phosphorylribose-1-pyrophosphate (PRPP) to anthranilate to yield N-(5'-phosphoribosyl)-anthranilate (PRA). The protein is Anthranilate phosphoribosyltransferase of Hydrogenovibrio crunogenus (strain DSM 25203 / XCL-2) (Thiomicrospira crunogena).